Reading from the N-terminus, the 392-residue chain is Chalcone synthase-like protein 1 (392 aa).

Residue Cys-166 is part of the active site.

It belongs to the thiolase-like superfamily. Chalcone/stilbene synthases family. In terms of tissue distribution, expressed at the same level in leaves and in glandular trichomes.

The protein resides in the cytoplasm. Chalcone synthase that may use malonyl-CoA and hexanoyl-CoA as substrates but without producing olivetol or olivetolic acid. The chain is Chalcone synthase-like protein 1 (CAN383) from Cannabis sativa (Hemp).